The following is a 579-amino-acid chain: O-fucosyltransferase 24 (579 aa).

Residues 58-78 (LWAFSLFLLSILGISLRLGLC) traverse the membrane as a helical; Signal-anchor for type II membrane protein segment. N133 carries an N-linked (GlcNAc...) asparagine glycan. Position 355-357 (355-357 (HLR)) interacts with substrate. 3 N-linked (GlcNAc...) asparagine glycosylation sites follow: N528, N573, and N576.

This sequence belongs to the glycosyltransferase GT106 family.

Its subcellular location is the membrane. It functions in the pathway glycan metabolism. The chain is O-fucosyltransferase 24 from Arabidopsis thaliana (Mouse-ear cress).